Consider the following 128-residue polypeptide: Aspartate 1-decarboxylase (128 aa).

The Schiff-base intermediate with substrate; via pyruvic acid role is filled by S25. The residue at position 25 (S25) is a Pyruvic acid (Ser). Position 57 (T57) interacts with substrate. Catalysis depends on Y58, which acts as the Proton donor. Substrate is bound at residue 73-75 (GSA).

This sequence belongs to the PanD family. In terms of assembly, heterooctamer of four alpha and four beta subunits. It depends on pyruvate as a cofactor. Is synthesized initially as an inactive proenzyme, which is activated by self-cleavage at a specific serine bond to produce a beta-subunit with a hydroxyl group at its C-terminus and an alpha-subunit with a pyruvoyl group at its N-terminus.

The protein resides in the cytoplasm. It catalyses the reaction L-aspartate + H(+) = beta-alanine + CO2. It participates in cofactor biosynthesis; (R)-pantothenate biosynthesis; beta-alanine from L-aspartate: step 1/1. Functionally, catalyzes the pyruvoyl-dependent decarboxylation of aspartate to produce beta-alanine. This is Aspartate 1-decarboxylase from Paraburkholderia phymatum (strain DSM 17167 / CIP 108236 / LMG 21445 / STM815) (Burkholderia phymatum).